The sequence spans 380 residues: Outer membrane protein assembly factor BamB (380 aa).

The first 18 residues, 1-18, serve as a signal peptide directing secretion; sequence MVQWKHAALLALALAVVG. Cysteine 19 is lipidated: N-palmitoyl cysteine. Cysteine 19 is lipidated: S-diacylglycerol cysteine.

The protein belongs to the BamB family. As to quaternary structure, part of the Bam complex.

The protein resides in the cell outer membrane. In terms of biological role, part of the outer membrane protein assembly complex, which is involved in assembly and insertion of beta-barrel proteins into the outer membrane. This chain is Outer membrane protein assembly factor BamB, found in Pseudomonas aeruginosa (strain ATCC 15692 / DSM 22644 / CIP 104116 / JCM 14847 / LMG 12228 / 1C / PRS 101 / PAO1).